We begin with the raw amino-acid sequence, 393 residues long: BEN domain-containing protein 5 (393 aa).

The stretch at 169–212 (RVLYEELLRSYQQQQQEMKHIQHELERTRKQLVQQAKKLKDYGS) forms a coiled coil. The region spanning 274-380 (GSGVWVNEEK…EKIMDINKSC (107 aa)) is the BEN domain.

May act as a transcriptional repressor. This chain is BEN domain-containing protein 5 (bend5), found in Xenopus laevis (African clawed frog).